Here is a 625-residue protein sequence, read N- to C-terminus: Chaperone protein HtpG (625 aa).

The a; substrate-binding stretch occupies residues 1-341 (MEKKQFQAES…SEDLSLNISR (341 aa)). A b region spans residues 342–551 (EMLQHDRQLK…DGEITLEMEK (210 aa)). The segment at 552-625 (VLQAMPDNQN…FSQNMCKVMV (74 aa)) is c.

The protein belongs to the heat shock protein 90 family. In terms of assembly, homodimer.

It localises to the cytoplasm. In terms of biological role, molecular chaperone. Has ATPase activity. The chain is Chaperone protein HtpG from Shouchella clausii (strain KSM-K16) (Alkalihalobacillus clausii).